Here is a 306-residue protein sequence, read N- to C-terminus: uncharacterized protein (306 aa).

10 consecutive transmembrane segments (helical) span residues 6–26 (LLGF…PIAL), 35–55 (AQTI…ALLA), 69–89 (YAWI…LFSS), 98–118 (VAQI…VLIF), 122–142 (LGLH…LFFN), 154–174 (YSTG…YGMA), 186–206 (QILL…ADFS), 211–231 (LTPL…IGYG), 247–267 (VVIT…HYFS), and 281–301 (YIGA…HKLL). EamA domains are found at residues 17–142 (MAWG…LFFN) and 166–296 (LIWV…LSAI).

The protein belongs to the EamA transporter family.

It is found in the cell membrane. This is an uncharacterized protein from Haemophilus influenzae (strain ATCC 51907 / DSM 11121 / KW20 / Rd).